We begin with the raw amino-acid sequence, 318 residues long: METRYNLKSPAVKRLMKEAAELKDPTDHYHAQPLEDNLFEWHFTVRGPPDSDFDGGVYHGRIVLPPEYPMKPPSIILLTANGRFEVGKKICLSISGHHPETWQPSWSIRTALLAIIGFMPTKGEGAIGSLDYTPEERRALAKKSQDFCCEGCGSAMKDVLLPLKSGSDSSQADQEAKELARQISFKAEVNSSGKTISESDLNHSFSLTDLQDDIPTTFQGATASTSYGLQNSSAASFHQPTQPVAKNTSMSPRQRRAQQQSQRRLSTSPDVIQGHQPRDNHTDHGGSAVLIVILTLALAALIFRRIYLANEYIFDFEL.

The Cytoplasmic portion of the chain corresponds to 1-282 (METRYNLKSP…QGHQPRDNHT (282 aa)). The region spanning 10 to 160 (PAVKRLMKEA…GCGSAMKDVL (151 aa)) is the UBC core domain. Cys-91 serves as the catalytic Glycyl thioester intermediate. At Ser-184 the chain carries Phosphoserine; by MAPKAPK2. Residues 229–248 (LQNSSAASFHQPTQPVAKNT) show a composition bias toward polar residues. Positions 229 to 283 (LQNSSAASFHQPTQPVAKNTSMSPRQRRAQQQSQRRLSTSPDVIQGHQPRDNHTD) are disordered. Residues 249 to 268 (SMSPRQRRAQQQSQRRLSTS) show a composition bias toward low complexity. A phosphoserine mark is found at Ser-266 and Ser-268. Residues 283–303 (DHGGSAVLIVILTLALAALIF) form a helical; Anchor for type IV membrane protein membrane-spanning segment. The Lumenal portion of the chain corresponds to 304–318 (RRIYLANEYIFDFEL).

The protein belongs to the ubiquitin-conjugating enzyme family. In terms of assembly, component of the HRD1 complex, which comprises at least SYNV1/HRD1, DERL1/2, FAM8A1, HERPUD1/HERP, OS9, SEL1L and UBE2J1. Interacts with E3 ligase RNF26. Interacts with E3 ligase RNF133. In terms of processing, phosphorylated at Ser-184 in a cytosolic stress-dependent manner by MAP kinase p38 MAPKAPK2. Post-translationally, phosphorylated UBE2J1 is rapidly ubiquitinated and subsequently degraded by the proteasome. In terms of tissue distribution, expressed in testes.

The protein localises to the endoplasmic reticulum membrane. It catalyses the reaction S-ubiquitinyl-[E1 ubiquitin-activating enzyme]-L-cysteine + [E2 ubiquitin-conjugating enzyme]-L-cysteine = [E1 ubiquitin-activating enzyme]-L-cysteine + S-ubiquitinyl-[E2 ubiquitin-conjugating enzyme]-L-cysteine.. The protein operates within protein modification; protein ubiquitination. Functionally, catalyzes the covalent attachment of ubiquitin to other proteins. Functions in the selective degradation of misfolded membrane proteins from the endoplasmic reticulum (ERAD) and is essential for cells to recover from ER stress. Plays a role in MAPKAPK2-dependent translational control of TNF-alpha synthesis. Also acts as a platform for perinuclear positioning of the endosomal system by mediating ubiquitination of SQSTM1 through interaction with the E3 ubiquitin-protein ligase RNF26. Plays a role in male fecundity through the interaction with the E3 ubiquitin-protein ligase RNF133. (Microbial infection) Promotes Dengue virus RNA replication by negatively regulating IFN-beta signaling and mediating 'Lys-48'-linked ubiquitination on IRF3. This is Ubiquitin-conjugating enzyme E2 J1 from Homo sapiens (Human).